A 370-amino-acid polypeptide reads, in one-letter code: UDP-N-acetylglucosamine--N-acetylmuramyl-(pentapeptide) pyrophosphoryl-undecaprenol N-acetylglucosamine transferase (370 aa).

UDP-N-acetyl-alpha-D-glucosamine-binding positions include 15-17 (TGG), asparagine 129, arginine 170, serine 199, isoleucine 254, and glutamine 299.

Belongs to the glycosyltransferase 28 family. MurG subfamily.

Its subcellular location is the cell inner membrane. It carries out the reaction di-trans,octa-cis-undecaprenyl diphospho-N-acetyl-alpha-D-muramoyl-L-alanyl-D-glutamyl-meso-2,6-diaminopimeloyl-D-alanyl-D-alanine + UDP-N-acetyl-alpha-D-glucosamine = di-trans,octa-cis-undecaprenyl diphospho-[N-acetyl-alpha-D-glucosaminyl-(1-&gt;4)]-N-acetyl-alpha-D-muramoyl-L-alanyl-D-glutamyl-meso-2,6-diaminopimeloyl-D-alanyl-D-alanine + UDP + H(+). It participates in cell wall biogenesis; peptidoglycan biosynthesis. Its function is as follows. Cell wall formation. Catalyzes the transfer of a GlcNAc subunit on undecaprenyl-pyrophosphoryl-MurNAc-pentapeptide (lipid intermediate I) to form undecaprenyl-pyrophosphoryl-MurNAc-(pentapeptide)GlcNAc (lipid intermediate II). The chain is UDP-N-acetylglucosamine--N-acetylmuramyl-(pentapeptide) pyrophosphoryl-undecaprenol N-acetylglucosamine transferase from Magnetococcus marinus (strain ATCC BAA-1437 / JCM 17883 / MC-1).